The chain runs to 737 residues: UPF0507 protein YML002W (737 aa).

The VPS9 domain maps to 1-83; the sequence is MDSHQLELPD…FEDFNKNTGN (83 aa).

This sequence belongs to the UPF0507 family.

The sequence is that of UPF0507 protein YML002W from Saccharomyces cerevisiae (strain ATCC 204508 / S288c) (Baker's yeast).